We begin with the raw amino-acid sequence, 478 residues long: ATP synthase subunit beta (478 aa).

Residue 164–171 coordinates ATP; sequence GGAGVGKT.

It belongs to the ATPase alpha/beta chains family. F-type ATPases have 2 components, CF(1) - the catalytic core - and CF(0) - the membrane proton channel. CF(1) has five subunits: alpha(3), beta(3), gamma(1), delta(1), epsilon(1). CF(0) has three main subunits: a(1), b(2) and c(9-12). The alpha and beta chains form an alternating ring which encloses part of the gamma chain. CF(1) is attached to CF(0) by a central stalk formed by the gamma and epsilon chains, while a peripheral stalk is formed by the delta and b chains.

It is found in the cell membrane. It carries out the reaction ATP + H2O + 4 H(+)(in) = ADP + phosphate + 5 H(+)(out). In terms of biological role, produces ATP from ADP in the presence of a proton gradient across the membrane. The catalytic sites are hosted primarily by the beta subunits. The chain is ATP synthase subunit beta from Corynebacterium kroppenstedtii (strain DSM 44385 / JCM 11950 / CIP 105744 / CCUG 35717).